The following is a 304-amino-acid chain: MSSPGTSMFTNFTKLCKGLALVLVVGHLVVQFIPATVPYLALIPARTIPFAWNLITSGYFELSVYGVVFSTVSLLFMGKFLEPVWGSTEFLKFIFVVNFLTYLCVFVTAIALYYITRLEVYLYMPFAGFHGVLAGLLVGIKQIIPDQEILLLKIKAKWLPSIMLILSIASSFFTLDSAAYLPTLIFGTYMGWLYLRYLQRRPETKLRGDPSDDFAFSTFFPELLRPVIDPIALIFHRMLCGRSNATSEDHDYSTSGAPLPGSDSAEASRRRERGARALEERLGTERLVPARNKDELQSDGLDNV.

6 helical membrane passes run 23–43, 58–78, 93–113, 120–140, 158–175, and 179–198; these read LVVG…LALI, GYFE…LFMG, FIFV…IALY, VYLY…LVGI, WLPS…FFTL, and AYLP…LRYL. The segment at 247–304 is disordered; it reads SEDHDYSTSGAPLPGSDSAEASRRRERGARALEERLGTERLVPARNKDELQSDGLDNV. Positions 266–284 are enriched in basic and acidic residues; the sequence is EASRRRERGARALEERLGT.

Belongs to the peptidase S54 family.

The protein resides in the membrane. In terms of biological role, probable rhomboid-type serine protease that catalyzes intramembrane proteolysis. The polypeptide is Rhomboid-like protein 19 (Arabidopsis thaliana (Mouse-ear cress)).